The primary structure comprises 155 residues: Transcriptional repressor NrdR (155 aa).

A zinc finger lies at 3-34 (CPNCHQNASRVIDSRPTDEGRTIRRRRECENC). The ATP-cone domain occupies 49–139 (LLVIKNDGTR…IYRQFTDMSS (91 aa)).

It belongs to the NrdR family. Zn(2+) is required as a cofactor.

Negatively regulates transcription of bacterial ribonucleotide reductase nrd genes and operons by binding to NrdR-boxes. The chain is Transcriptional repressor NrdR from Lactobacillus delbrueckii subsp. bulgaricus (strain ATCC 11842 / DSM 20081 / BCRC 10696 / JCM 1002 / NBRC 13953 / NCIMB 11778 / NCTC 12712 / WDCM 00102 / Lb 14).